Here is a 398-residue protein sequence, read N- to C-terminus: 2,3,4,5-tetrahydropyridine-2,6-dicarboxylate N-succinyltransferase (398 aa).

Glu-268 (acyl-anhydride intermediate) is an active-site residue. Succinyl-CoA contacts are provided by residues Arg-270, Gly-285, Ser-288, Ala-311, 326–327 (DG), Gly-334, Lys-361, and 374–377 (RQNS).

The protein belongs to the type 2 tetrahydrodipicolinate N-succinyltransferase family. In terms of assembly, homotrimer.

It localises to the cytoplasm. The catalysed reaction is (S)-2,3,4,5-tetrahydrodipicolinate + succinyl-CoA + H2O = (S)-2-succinylamino-6-oxoheptanedioate + CoA. Its pathway is amino-acid biosynthesis; L-lysine biosynthesis via DAP pathway; LL-2,6-diaminopimelate from (S)-tetrahydrodipicolinate (succinylase route): step 1/3. Functionally, catalyzes the conversion of the cyclic tetrahydrodipicolinate (THDP) into the acyclic N-succinyl-L-2-amino-6-oxopimelate using succinyl-CoA. This Sulfurimonas denitrificans (strain ATCC 33889 / DSM 1251) (Thiomicrospira denitrificans (strain ATCC 33889 / DSM 1251)) protein is 2,3,4,5-tetrahydropyridine-2,6-dicarboxylate N-succinyltransferase.